Here is an 893-residue protein sequence, read N- to C-terminus: UPF0182 protein CLK_3152 (893 aa).

Helical transmembrane passes span 9-29 (IPLFIIILFIAFFNKIINFII), 49-69 (AIIILMIPIFIIFFISIWMYY), 94-114 (LFFIFNFIVSIFLAYIFSSSY), 154-174 (VIISLLLFLVITTFIAYFILE), 202-222 (LAIVSGLIILFISFGHLIKIW), 246-266 (FYKIIVVITLISSIVTLLSIV), and 273-293 (VSICIGITIFLIVSQNIASFL).

Belongs to the UPF0182 family.

Its subcellular location is the cell membrane. This is UPF0182 protein CLK_3152 from Clostridium botulinum (strain Loch Maree / Type A3).